The following is a 208-amino-acid chain: Small ribosomal subunit protein uS4 (208 aa).

The S4 RNA-binding domain occupies Ser96–Leu159.

Belongs to the universal ribosomal protein uS4 family. Part of the 30S ribosomal subunit. Contacts protein S5. The interaction surface between S4 and S5 is involved in control of translational fidelity.

Functionally, one of the primary rRNA binding proteins, it binds directly to 16S rRNA where it nucleates assembly of the body of the 30S subunit. With S5 and S12 plays an important role in translational accuracy. The sequence is that of Small ribosomal subunit protein uS4 from Mycoplasma capricolum subsp. capricolum (strain California kid / ATCC 27343 / NCTC 10154).